Here is a 514-residue protein sequence, read N- to C-terminus: L-threonine dehydratase biosynthetic IlvA (514 aa).

Lys62 carries the post-translational modification N6-(pyridoxal phosphate)lysine. Residues Asn89, 188-192 (GGGGL), and Ser315 contribute to the pyridoxal 5'-phosphate site. ACT-like domains lie at 339 to 411 (ALLA…DLSD) and 434 to 504 (RLYS…DETN).

This sequence belongs to the serine/threonine dehydratase family. As to quaternary structure, homotetramer. Requires pyridoxal 5'-phosphate as cofactor.

It carries out the reaction L-threonine = 2-oxobutanoate + NH4(+). It functions in the pathway amino-acid biosynthesis; L-isoleucine biosynthesis; 2-oxobutanoate from L-threonine: step 1/1. Its activity is regulated as follows. Isoleucine allosterically inhibits whereas valine allosterically activates this enzyme. Functionally, catalyzes the anaerobic formation of alpha-ketobutyrate and ammonia from threonine in a two-step reaction. The first step involved a dehydration of threonine and a production of enamine intermediates (aminocrotonate), which tautomerizes to its imine form (iminobutyrate). Both intermediates are unstable and short-lived. The second step is the nonenzymatic hydrolysis of the enamine/imine intermediates to form 2-ketobutyrate and free ammonia. In the low water environment of the cell, the second step is accelerated by RidA. In Escherichia coli (strain K12), this protein is L-threonine dehydratase biosynthetic IlvA (ilvA).